Here is an 833-residue protein sequence, read N- to C-terminus: Homeobox-leucine zipper protein ATHB-8 (833 aa).

Residues 12 to 75 (DNGKYVRYTP…NRRCREKQRK (64 aa)) constitute a DNA-binding region (homeobox). Positions 70–108 (REKQRKEASRLQAVNRKLTAMNKLLMEENDRLQKQVSHL) form a coiled coil. An START domain is found at 150 to 378 (RDASPAGLLS…ISQEISQPNV (229 aa)).

Belongs to the HD-ZIP homeobox family. Class III subfamily. Interacts with ESR1 and ESR2. Interacts with ZPR3.

It is found in the nucleus. Its function is as follows. Probable transcription factor involved in the regulation of vascular development. May promote differentiation of precambial and cambial cells. In Arabidopsis thaliana (Mouse-ear cress), this protein is Homeobox-leucine zipper protein ATHB-8 (ATHB-8).